We begin with the raw amino-acid sequence, 286 residues long: Apoptosis inhibitor 1 (286 aa).

2 BIR repeats span residues 29 to 96 (LIER…CAYA) and 131 to 199 (LQSR…CYFV). Zn(2+) contacts are provided by C169, C172, H189, and C196. An RING-type zinc finger spans residues 238 to 274 (CKVCLERQRDAVLMPCRHFCVCVQCYFGLDQKCPTCR).

Functionally, acts by blocking cellular apoptosis early in infection. Later, stimulates caspase-3-like protease activity and induces apoptosis, probably to favor the release of occluded virions. In Lepidoptera (butterflies and moths), this protein is Apoptosis inhibitor 1 (IAP1).